Reading from the N-terminus, the 69-residue chain is uncharacterized protein (69 aa).

2 disordered regions span residues 1 to 32 (MSAP…GWGD) and 44 to 69 (QSDA…APSD). Basic and acidic residues-rich tracts occupy residues 7-32 (NLDR…GWGD) and 46-69 (DADK…APSD).

This is an uncharacterized protein from Schizosaccharomyces pombe (strain 972 / ATCC 24843) (Fission yeast).